The primary structure comprises 376 residues: Protein-glutamate methylesterase/protein-glutamine glutaminase (376 aa).

Residues 4–121 (KVLVVDDSSF…ARNRDEAVSL (118 aa)) form the Response regulatory domain. Asp55 is subject to 4-aspartylphosphate. Residues 142 to 161 (SSQSTSTVESRTATTRTATS) form a disordered region. A compositionally biased stretch (low complexity) spans 145 to 161 (STSTVESRTATTRTATS). The CheB-type methylesterase domain maps to 183–376 (TGKKYQLTAI…ERMLVEVGLK (194 aa)). Active-site residues include Ser195, His222, and Asp318.

The protein belongs to the CheB family. In terms of processing, phosphorylated by CheA. Phosphorylation of the N-terminal regulatory domain activates the methylesterase activity.

Its subcellular location is the cytoplasm. It catalyses the reaction [protein]-L-glutamate 5-O-methyl ester + H2O = L-glutamyl-[protein] + methanol + H(+). It carries out the reaction L-glutaminyl-[protein] + H2O = L-glutamyl-[protein] + NH4(+). Functionally, involved in chemotaxis. Part of a chemotaxis signal transduction system that modulates chemotaxis in response to various stimuli. Catalyzes the demethylation of specific methylglutamate residues introduced into the chemoreceptors (methyl-accepting chemotaxis proteins or MCP) by CheR. Also mediates the irreversible deamidation of specific glutamine residues to glutamic acid. This Aliivibrio fischeri (strain ATCC 700601 / ES114) (Vibrio fischeri) protein is Protein-glutamate methylesterase/protein-glutamine glutaminase.